The sequence spans 723 residues: MSAQNIQSAGKCPVMHGANTEVGTSNMDWWPKALNLDILHQHDTKTNPMDEEFSYREAVKTLDFAAVKRDVEALMTDSQAWWPADWGHYGGLMIRMAWHAAGSYRAADGRGGANTGNQRFAPLNSWPDNANLDKARRLLWPIKKKYGNRLSWADLIVLAGNVAYESMGLKTFGFGFGREDIWHPEKDTYWGAEKEWLAPSDERYGSVDDPSTMENPLAAVQMGLIYVNPEGVNGKPDPLKTAAQVRETFARMGMNDEETVALTAGGHTVGKTHGNGRAENLGPSPEGADISEQGLGWMNHKTRGIGRDSVTSGIEGAWTTHPTKWDNGYFDMLFGHEWELKKSPAGAWQWEPVDIREEDMPVDVEDPSIRCKPIMTDADMAMREDPIYRKISERFHKDPALLTETFARAWFKLIHRDMGPKARYIGPEVPAEDLIWQDPVPAGKTGYDVDAVKAKIAASGLSIAEMVATAWDSARTFRQSDFRGGANGARIRLAPQKDWEGNEPARLQKVLAVLEPIAADSGASVADVIVLAGNVGIEQAAKAAGVNVTVPFAPGRGDATQEMTDADGFAVLEPIHDGYRNWVKKDYVVSAEELMLDRTQLMGLTAAEMTVLVGGMRVLGTNHGGAKHGVFTDKVGTLSQDFFVNLTDMNNVWKPAGAHYEIRDRKTDAVKWTATRVDLVFGSNSILRAYAEVYAQDDNQEKFVRDFVNAWTKVMNADRFDLK.

Positions 98 to 226 form a cross-link, tryptophyl-tyrosyl-methioninium (Trp-Tyr) (with M-252); that stretch reads WHAAGSYRAA…LAAVQMGLIY (129 aa). His-99 serves as the catalytic Proton acceptor. A cross-link (tryptophyl-tyrosyl-methioninium (Tyr-Met) (with W-98)) is located at residues 226 to 252; it reads YVNPEGVNGKPDPLKTAAQVRETFARM. His-267 contacts heme b. Residues 267–286 are disordered; sequence HTVGKTHGNGRAENLGPSPE.

It belongs to the peroxidase family. Peroxidase/catalase subfamily. In terms of assembly, homodimer or homotetramer. The cofactor is heme b. Formation of the three residue Trp-Tyr-Met cross-link is important for the catalase, but not the peroxidase activity of the enzyme.

The enzyme catalyses H2O2 + AH2 = A + 2 H2O. The catalysed reaction is 2 H2O2 = O2 + 2 H2O. Functionally, bifunctional enzyme with both catalase and broad-spectrum peroxidase activity. This Thioalkalivibrio sulfidiphilus (strain HL-EbGR7) protein is Catalase-peroxidase.